The primary structure comprises 307 residues: Ornithine carbamoyltransferase (307 aa).

Carbamoyl phosphate is bound by residues 53 to 56, Q80, R104, and 131 to 134; these read STRT and HPCQ. L-ornithine is bound by residues N162, D220, and 224–225; that span reads SM. Residues 260 to 261 and R288 each bind carbamoyl phosphate; that span reads CL.

The protein belongs to the aspartate/ornithine carbamoyltransferase superfamily. OTCase family.

It localises to the cytoplasm. The enzyme catalyses carbamoyl phosphate + L-ornithine = L-citrulline + phosphate + H(+). Its pathway is amino-acid biosynthesis; L-arginine biosynthesis; L-arginine from L-ornithine and carbamoyl phosphate: step 1/3. Its function is as follows. Reversibly catalyzes the transfer of the carbamoyl group from carbamoyl phosphate (CP) to the N(epsilon) atom of ornithine (ORN) to produce L-citrulline. This chain is Ornithine carbamoyltransferase, found in Nitrosomonas eutropha (strain DSM 101675 / C91 / Nm57).